Reading from the N-terminus, the 126-residue chain is Ribosome-binding factor A (126 aa).

It belongs to the RbfA family. In terms of assembly, monomer. Binds 30S ribosomal subunits, but not 50S ribosomal subunits or 70S ribosomes.

The protein localises to the cytoplasm. One of several proteins that assist in the late maturation steps of the functional core of the 30S ribosomal subunit. Associates with free 30S ribosomal subunits (but not with 30S subunits that are part of 70S ribosomes or polysomes). Required for efficient processing of 16S rRNA. May interact with the 5'-terminal helix region of 16S rRNA. The chain is Ribosome-binding factor A from Clostridioides difficile (strain 630) (Peptoclostridium difficile).